A 599-amino-acid chain; its full sequence is MFNKFDTKPLWEVSKTLSSVAQGLEPADMVIINSRLINVCTREVIENTDVAISCGRIALVGDAKHCIGENTEVIDAKGQYIAPGFLDGHIHVESSMLSVSEYARSVVPHGTVGIYMDPHEICNVLGLNGVRYMIEDGKGTPLKNMVTTPSCVPAVPGFEDTGAAVGPEDVRETMKWDEIVGLGEMMNFPGILYSTDHAHGVVGETLKASKTVTGHYSLPETGKGLNGYIASGVRCCHESTRAEDALAKMRLGMYAMFREGSAWHDLKEVSKAITENKVDSRFAVLISDDTHPHTLLKDGHLDHIIKRAIEEGIEPLTAIQMVTINCAQCFQMDHELGSITPGKCADIVFIEDLKDVKITKVIIDGNLVAKGGLLTTSIAKYDYPEDAMNSMHIKNKITPDSFNIMAPNKEKITARVIEIIPERVGTYERHVELNVKDDKVQCDPSKDVLKAVVFERHHETGTAGYGFVKGFGIKRGAMAATVAHDAHNLLVIGTNDEDMALAANTLIECGGGMVAVQDGKVLGLVPLPIAGLMSNKPLEEMAEMVEKLDSAWKEIGCDIVSPFMTMALIPLACLPELRLTNRGLVDCNKFEFVSLFVEE.

This sequence belongs to the metallo-dependent hydrolases superfamily. Adenine deaminase family. Requires Mn(2+) as cofactor.

The enzyme catalyses adenine + H2O + H(+) = hypoxanthine + NH4(+). The protein is Adenine deaminase of Clostridium botulinum (strain ATCC 19397 / Type A).